The primary structure comprises 644 residues: 1-deoxy-D-xylulose-5-phosphate synthase (644 aa).

Thiamine diphosphate contacts are provided by residues H78 and 120–122 (GHA). Mg(2+) is bound at residue D150. Residues 151 to 152 (AA), N179, and E374 each bind thiamine diphosphate. Residue N179 coordinates Mg(2+).

Belongs to the transketolase family. DXPS subfamily. As to quaternary structure, homodimer. Mg(2+) is required as a cofactor. Thiamine diphosphate serves as cofactor.

The enzyme catalyses D-glyceraldehyde 3-phosphate + pyruvate + H(+) = 1-deoxy-D-xylulose 5-phosphate + CO2. It functions in the pathway metabolic intermediate biosynthesis; 1-deoxy-D-xylulose 5-phosphate biosynthesis; 1-deoxy-D-xylulose 5-phosphate from D-glyceraldehyde 3-phosphate and pyruvate: step 1/1. Functionally, catalyzes the acyloin condensation reaction between C atoms 2 and 3 of pyruvate and glyceraldehyde 3-phosphate to yield 1-deoxy-D-xylulose-5-phosphate (DXP). This Chlamydia pneumoniae (Chlamydophila pneumoniae) protein is 1-deoxy-D-xylulose-5-phosphate synthase.